The primary structure comprises 327 residues: Glycerol-3-phosphate dehydrogenase [NAD(P)+] (327 aa).

3 residues coordinate NADPH: Trp-11, His-30, and Lys-103. Residues Lys-103, Gly-131, and Ser-133 each contribute to the sn-glycerol 3-phosphate site. Ala-135 provides a ligand contact to NADPH. Sn-glycerol 3-phosphate is bound by residues Lys-186, Asp-243, Ser-253, Arg-254, and Asn-255. Catalysis depends on Lys-186, which acts as the Proton acceptor. Arg-254 provides a ligand contact to NADPH. NADPH is bound by residues Val-281 and Glu-283.

The protein belongs to the NAD-dependent glycerol-3-phosphate dehydrogenase family.

Its subcellular location is the cytoplasm. The enzyme catalyses sn-glycerol 3-phosphate + NAD(+) = dihydroxyacetone phosphate + NADH + H(+). It catalyses the reaction sn-glycerol 3-phosphate + NADP(+) = dihydroxyacetone phosphate + NADPH + H(+). It participates in membrane lipid metabolism; glycerophospholipid metabolism. Functionally, catalyzes the reduction of the glycolytic intermediate dihydroxyacetone phosphate (DHAP) to sn-glycerol 3-phosphate (G3P), the key precursor for phospholipid synthesis. The chain is Glycerol-3-phosphate dehydrogenase [NAD(P)+] from Wolbachia sp. subsp. Brugia malayi (strain TRS).